Here is a 192-residue protein sequence, read N- to C-terminus: Outer-membrane lipoprotein LolB (192 aa).

The signal sequence occupies residues 1-17; the sequence is MTYRTLCILAFTALISA. The N-palmitoyl cysteine moiety is linked to residue C18. C18 carries the S-diacylglycerol cysteine lipid modification.

This sequence belongs to the LolB family. Monomer.

The protein localises to the cell outer membrane. In terms of biological role, plays a critical role in the incorporation of lipoproteins in the outer membrane after they are released by the LolA protein. This chain is Outer-membrane lipoprotein LolB, found in Marinomonas sp. (strain MWYL1).